Consider the following 75-residue polypeptide: uncharacterized protein (75 aa).

The helical transmembrane segment at Val49–Phe69 threads the bilayer.

It is found in the host membrane. This is an uncharacterized protein from Saccharolobus islandicus (Sulfolobus islandicus).